A 152-amino-acid chain; its full sequence is Superoxide dismutase [Cu-Zn] (152 aa).

Serine 2 is modified (N-acetylserine). The Cu cation site is built by histidine 44, histidine 46, and histidine 61. The cysteines at positions 55 and 144 are disulfide-linked. Positions 61, 69, 78, and 81 each coordinate Zn(2+). Histidine 118 contributes to the Cu cation binding site.

The protein belongs to the Cu-Zn superoxide dismutase family. In terms of assembly, monomer. It depends on Cu cation as a cofactor. Zn(2+) is required as a cofactor.

It localises to the cytoplasm. The catalysed reaction is 2 superoxide + 2 H(+) = H2O2 + O2. Its activity is regulated as follows. Inhibited by KCN and diethyldithiocarbamate. Destroys radicals which are normally produced within the cells and which are toxic to biological systems. The plasma superoxide dismutase has phagocytosis-stimulating activity and may play an important role in the biological defenses of the organism. This Halocynthia roretzi (Sea squirt) protein is Superoxide dismutase [Cu-Zn].